The chain runs to 67 residues: Probable Sec-independent protein translocase protein TatE (67 aa).

A helical membrane pass occupies residues 1–21; it reads MEGISLAKLLIVGALIVLLFG. The tract at residues 43 to 67 is disordered; the sequence is MNDDSDATSKTASEDKNAGQAVHKE. A compositionally biased stretch (basic and acidic residues) spans 54–67; the sequence is ASEDKNAGQAVHKE.

It belongs to the TatA/E family. TatE subfamily.

The protein resides in the cell inner membrane. Its function is as follows. Part of the twin-arginine translocation (Tat) system that transports large folded proteins containing a characteristic twin-arginine motif in their signal peptide across membranes. TatE shares overlapping functions with TatA. This is Probable Sec-independent protein translocase protein TatE from Erwinia tasmaniensis (strain DSM 17950 / CFBP 7177 / CIP 109463 / NCPPB 4357 / Et1/99).